We begin with the raw amino-acid sequence, 593 residues long: Meiosis-specific APC/C activator protein AMA1 (593 aa).

The span at methionine 1–asparagine 11 shows a compositional bias: basic residues. Positions methionine 1–threonine 26 are disordered. Residues serine 12–serine 25 are compositionally biased toward low complexity. The C-box motif lies at aspartate 29 to serine 35. Low complexity predominate over residues serine 94–serine 109. Residues serine 94 to lysine 125 are disordered. The span at serine 113–lysine 125 shows a compositional bias: basic and acidic residues. 6 WD repeats span residues arginine 226–leucine 264, glutamate 271–asparagine 310, glutamate 323–lysine 364, alanine 388–lysine 427, proline 432–glutamate 474, and proline 525–isoleucine 564.

This sequence belongs to the WD repeat CDC20/Fizzy family. As to quaternary structure, interacts with CDC16.

In terms of biological role, activator protein that regulates the ubiquitin ligase activity and substrate specificity of the anaphase promoting complex/cyclosome (APC/C). Required for the ubiquitination and subsequent degradation of the B-type cyclin CLB1 by the APC/C complex during meiosis. Required for meiosis I, late meiotic gene expression and spore wall assembly. This is Meiosis-specific APC/C activator protein AMA1 (AMA1) from Saccharomyces cerevisiae (strain ATCC 204508 / S288c) (Baker's yeast).